We begin with the raw amino-acid sequence, 290 residues long: Diaminopimelate epimerase (290 aa).

Positions 17, 49, and 69 each coordinate substrate. The active-site Proton donor is the Cys-78. Residues 79 to 80 (GN), Asn-166, Asn-199, and 217 to 218 (ER) contribute to the substrate site. Cys-226 (proton acceptor) is an active-site residue. 227–228 (GS) is a binding site for substrate.

It belongs to the diaminopimelate epimerase family. Homodimer.

Its subcellular location is the cytoplasm. It catalyses the reaction (2S,6S)-2,6-diaminopimelate = meso-2,6-diaminopimelate. The protein operates within amino-acid biosynthesis; L-lysine biosynthesis via DAP pathway; DL-2,6-diaminopimelate from LL-2,6-diaminopimelate: step 1/1. In terms of biological role, catalyzes the stereoinversion of LL-2,6-diaminopimelate (L,L-DAP) to meso-diaminopimelate (meso-DAP), a precursor of L-lysine and an essential component of the bacterial peptidoglycan. The chain is Diaminopimelate epimerase from Afipia carboxidovorans (strain ATCC 49405 / DSM 1227 / KCTC 32145 / OM5) (Oligotropha carboxidovorans).